The chain runs to 310 residues: E3 ubiquitin-protein ligase CSU1 (310 aa).

An RING-type 1; degenerate zinc finger spans residues 43-67; it reads CSLCLKPFIDPMCCHKGHVFCRECI. Residues 75-95 adopt a coiled-coil conformation; it reads KKDIQRRLAAHSSQKKQDKDE. Positions 110 to 138 are disordered; it reads EFDQQNHSAMPRNSDKNHNEDKNGFHGAN. Over residues 122–133 the composition is skewed to basic and acidic residues; that stretch reads NSDKNHNEDKNG. Residues 221–263 form an RING-type 2 zinc finger; sequence CPSCKVTLTNTMSLVALSSCGHVFCKKCAEKFMPVDKVCLVCD.

It belongs to the NOSIP family.

It localises to the nucleus. Its subcellular location is the nucleus speckle. It catalyses the reaction S-ubiquitinyl-[E2 ubiquitin-conjugating enzyme]-L-cysteine + [acceptor protein]-L-lysine = [E2 ubiquitin-conjugating enzyme]-L-cysteine + N(6)-ubiquitinyl-[acceptor protein]-L-lysine.. It functions in the pathway protein modification; protein ubiquitination. RING-finger E3 ubiquitin-protein ligase that plays an major role in maintaining COP1 homeostasis in darkness. Negatively regulates COP1 protein accumulation by targeting COP1 for ubiquitination and subsequent proteasomal degradation in dark-grown seedlings. Negatively regulates the accumulation of SPA1 protein in the dark. The chain is E3 ubiquitin-protein ligase CSU1 from Arabidopsis thaliana (Mouse-ear cress).